The following is a 417-amino-acid chain: Snake venom metalloproteinase acutolysin-C (417 aa).

The N-terminal stretch at 1 to 20 (MIQVLLVTICLAALPYQGSS) is a signal peptide. Residues 21–189 (IMLESGKVND…KRPSRLNLTP (169 aa)) constitute a propeptide, activation peptide. The Peptidase M12B domain maps to 197–392 (TSVNLQLIVD…KKPKCIHKKS (196 aa)). 3 disulfides stabilise this stretch: Cys-308–Cys-387, Cys-349–Cys-371, and Cys-351–Cys-354. His-333 lines the Zn(2+) pocket. Glu-334 is a catalytic residue. Residues His-337 and His-343 each coordinate Zn(2+). A propeptide spanning residues 393–417 (LKTDTVSTSVSGNEPLDDNVDGFHA) is cleaved from the precursor. Positions 398-417 (VSTSVSGNEPLDDNVDGFHA) are disordered. Over residues 407 to 417 (PLDDNVDGFHA) the composition is skewed to acidic residues.

It belongs to the venom metalloproteinase (M12B) family. P-I subfamily. Monomer. It depends on Zn(2+) as a cofactor. In terms of tissue distribution, expressed by the venom gland.

It localises to the secreted. Its function is as follows. This protein is an alkaline zinc metalloprotease from snake venom that possesses weak hemorrhagic activity. The polypeptide is Snake venom metalloproteinase acutolysin-C (Deinagkistrodon acutus (Hundred-pace snake)).